A 349-amino-acid polypeptide reads, in one-letter code: Anthranilate phosphoribosyltransferase (349 aa).

5-phospho-alpha-D-ribose 1-diphosphate contacts are provided by residues glycine 84, 87-88, threonine 92, 94-97, 112-120, and serine 124; these read GD, NIST, and KHGNRAASS. Residue glycine 84 participates in anthranilate binding. Residue serine 96 coordinates Mg(2+). Residue asparagine 115 coordinates anthranilate. Anthranilate is bound at residue arginine 170. Mg(2+) contacts are provided by aspartate 228 and glutamate 229.

The protein belongs to the anthranilate phosphoribosyltransferase family. In terms of assembly, homodimer. The cofactor is Mg(2+).

The catalysed reaction is N-(5-phospho-beta-D-ribosyl)anthranilate + diphosphate = 5-phospho-alpha-D-ribose 1-diphosphate + anthranilate. It functions in the pathway amino-acid biosynthesis; L-tryptophan biosynthesis; L-tryptophan from chorismate: step 2/5. Its function is as follows. Catalyzes the transfer of the phosphoribosyl group of 5-phosphorylribose-1-pyrophosphate (PRPP) to anthranilate to yield N-(5'-phosphoribosyl)-anthranilate (PRA). The sequence is that of Anthranilate phosphoribosyltransferase from Leifsonia xyli subsp. xyli (strain CTCB07).